The sequence spans 353 residues: UDP-N-acetylglucosamine--N-acetylmuramyl-(pentapeptide) pyrophosphoryl-undecaprenol N-acetylglucosamine transferase (353 aa).

Residues 10–12, asparagine 124, serine 183, and glutamine 283 each bind UDP-N-acetyl-alpha-D-glucosamine; that span reads TGG.

It belongs to the glycosyltransferase 28 family. MurG subfamily.

Its subcellular location is the cell inner membrane. It catalyses the reaction di-trans,octa-cis-undecaprenyl diphospho-N-acetyl-alpha-D-muramoyl-L-alanyl-D-glutamyl-meso-2,6-diaminopimeloyl-D-alanyl-D-alanine + UDP-N-acetyl-alpha-D-glucosamine = di-trans,octa-cis-undecaprenyl diphospho-[N-acetyl-alpha-D-glucosaminyl-(1-&gt;4)]-N-acetyl-alpha-D-muramoyl-L-alanyl-D-glutamyl-meso-2,6-diaminopimeloyl-D-alanyl-D-alanine + UDP + H(+). The protein operates within cell wall biogenesis; peptidoglycan biosynthesis. Functionally, cell wall formation. Catalyzes the transfer of a GlcNAc subunit on undecaprenyl-pyrophosphoryl-MurNAc-pentapeptide (lipid intermediate I) to form undecaprenyl-pyrophosphoryl-MurNAc-(pentapeptide)GlcNAc (lipid intermediate II). The chain is UDP-N-acetylglucosamine--N-acetylmuramyl-(pentapeptide) pyrophosphoryl-undecaprenol N-acetylglucosamine transferase from Helicobacter pylori (strain J99 / ATCC 700824) (Campylobacter pylori J99).